Consider the following 64-residue polypeptide: MPKVEVKNGDLDAALKSFKRITSETEKAYKKHEFYLRPGLRKKEKEKAAAKKRNKYNKRRSFYY.

The interval 42 to 64 (KKEKEKAAAKKRNKYNKRRSFYY) is disordered. Positions 50-64 (AKKRNKYNKRRSFYY) are enriched in basic residues.

The protein belongs to the bacterial ribosomal protein bS21 family.

The protein is Small ribosomal subunit protein bS21 of Malacoplasma penetrans (strain HF-2) (Mycoplasma penetrans).